A 418-amino-acid chain; its full sequence is Metacaspase-4 (418 aa).

Active-site residues include His86 and Cys139. Cys139 is subject to S-nitrosocysteine. The segment at 153 to 172 (GESTKKEAEDEDESEESSSR) is disordered.

It belongs to the peptidase C14B family. The two subunits are derived from the precursor sequence by an autocatalytic mechanism. Expressed in roots, cotyledons, leaves, cauline leaves, pollen and embryos.

Its subcellular location is the cytoplasm. The protein resides in the cytosol. Its activity is regulated as follows. Activated by Ca(2+) which induces self-processing and accelerates the rate of the enzyme activity, but has no effect on Km. Cysteine protease that cleaves specifically after arginine or lysine residues. Does not cleave caspase-specific substrates. Plays a positive regulatory role in biotic and abiotic stress-induced programmed cell death. The polypeptide is Metacaspase-4 (AMC4) (Arabidopsis thaliana (Mouse-ear cress)).